The following is a 551-amino-acid chain: Putative ABC transporter ATP-binding protein BT9727_3105 (551 aa).

2 ABC transporter domains span residues 5-243 (AEIN…FRPF) and 293-525 (LSAE…SINR). Residues 39 to 46 (GGSGSGKT) and 327 to 334 (GKNGTGKS) each bind ATP.

This sequence belongs to the ABC transporter superfamily.

The protein resides in the cell membrane. In terms of biological role, probably part of an ABC transporter complex. Responsible for energy coupling to the transport system. This Bacillus thuringiensis subsp. konkukian (strain 97-27) protein is Putative ABC transporter ATP-binding protein BT9727_3105.